The chain runs to 182 residues: Lipoprotein signal peptidase (182 aa).

4 helical membrane passes run 15 to 35 (IYLGVIFLGIVLDLVTKFLVI), 44 to 64 (LEVFGSFFRMTLTFNTGFVFG), 65 to 85 (AFQDNAIPSLIATGVAIVFLI), and 97 to 117 (PWGWNLVMAGAFGNFLDKFFV). Active-site residues include D140 and D162. A helical membrane pass occupies residues 155–175 (WPAFNVADSCVTIGLTILIFT).

The protein belongs to the peptidase A8 family.

The protein localises to the cell inner membrane. The enzyme catalyses Release of signal peptides from bacterial membrane prolipoproteins. Hydrolyzes -Xaa-Yaa-Zaa-|-(S,diacylglyceryl)Cys-, in which Xaa is hydrophobic (preferably Leu), and Yaa (Ala or Ser) and Zaa (Gly or Ala) have small, neutral side chains.. It participates in protein modification; lipoprotein biosynthesis (signal peptide cleavage). Its function is as follows. This protein specifically catalyzes the removal of signal peptides from prolipoproteins. The polypeptide is Lipoprotein signal peptidase (Leptospira interrogans serogroup Icterohaemorrhagiae serovar Lai (strain 56601)).